The following is a 279-amino-acid chain: NADPH-dependent 7-cyano-7-deazaguanine reductase (279 aa).

Residue 86–88 (IES) coordinates substrate. 88–89 (SK) is a binding site for NADPH. Cys-187 acts as the Thioimide intermediate in catalysis. The Proton donor role is filled by Asp-194. 226–227 (HE) provides a ligand contact to substrate. An NADPH-binding site is contributed by 255-256 (RG).

The protein belongs to the GTP cyclohydrolase I family. QueF type 2 subfamily. In terms of assembly, homodimer.

It localises to the cytoplasm. The enzyme catalyses 7-aminomethyl-7-carbaguanine + 2 NADP(+) = 7-cyano-7-deazaguanine + 2 NADPH + 3 H(+). It participates in tRNA modification; tRNA-queuosine biosynthesis. Functionally, catalyzes the NADPH-dependent reduction of 7-cyano-7-deazaguanine (preQ0) to 7-aminomethyl-7-deazaguanine (preQ1). This is NADPH-dependent 7-cyano-7-deazaguanine reductase from Glaesserella parasuis serovar 5 (strain SH0165) (Haemophilus parasuis).